A 302-amino-acid polypeptide reads, in one-letter code: Dermonecrotic toxin LiSicTox-alphaIA1bii (302 aa).

An N-terminal signal peptide occupies residues 1-14 (ARVVLGCWSVLSQA). The propeptide occupies 15-22 (AQTDDEER). His-34 is an active-site residue. The Mg(2+) site is built by Glu-54 and Asp-56. The active-site Nucleophile is the His-70. 2 cysteine pairs are disulfide-bonded: Cys-74–Cys-80 and Cys-76–Cys-219. Position 114 (Asp-114) interacts with Mg(2+).

The protein belongs to the arthropod phospholipase D family. Class II subfamily. Class IIa sub-subfamily. Requires Mg(2+) as cofactor. In terms of tissue distribution, expressed by the venom gland.

The protein localises to the secreted. It carries out the reaction an N-(acyl)-sphingosylphosphocholine = an N-(acyl)-sphingosyl-1,3-cyclic phosphate + choline. It catalyses the reaction an N-(acyl)-sphingosylphosphoethanolamine = an N-(acyl)-sphingosyl-1,3-cyclic phosphate + ethanolamine. The enzyme catalyses a 1-acyl-sn-glycero-3-phosphocholine = a 1-acyl-sn-glycero-2,3-cyclic phosphate + choline. The catalysed reaction is a 1-acyl-sn-glycero-3-phosphoethanolamine = a 1-acyl-sn-glycero-2,3-cyclic phosphate + ethanolamine. Functionally, dermonecrotic toxins cleave the phosphodiester linkage between the phosphate and headgroup of certain phospholipids (sphingolipid and lysolipid substrates), forming an alcohol (often choline) and a cyclic phosphate. This toxin acts on sphingomyelin (SM). It may also act on ceramide phosphoethanolamine (CPE), lysophosphatidylcholine (LPC) and lysophosphatidylethanolamine (LPE), but not on lysophosphatidylserine (LPS), and lysophosphatidylglycerol (LPG). It acts by transphosphatidylation, releasing exclusively cyclic phosphate products as second products. Induces hemolysis, dermonecrosis, vascular permeability and platelet aggregation. The sequence is that of Dermonecrotic toxin LiSicTox-alphaIA1bii from Loxosceles intermedia (Brown spider).